The following is a 31-amino-acid chain: Cytochrome b6-f complex subunit 6 (31 aa).

Residues 4 to 26 (LTSYFGFLLAALTITSALFIGLN) traverse the membrane as a helical segment.

This sequence belongs to the PetL family. In terms of assembly, the 4 large subunits of the cytochrome b6-f complex are cytochrome b6, subunit IV (17 kDa polypeptide, PetD), cytochrome f and the Rieske protein, while the 4 small subunits are PetG, PetL, PetM and PetN. The complex functions as a dimer.

The protein resides in the plastid. It localises to the chloroplast thylakoid membrane. Component of the cytochrome b6-f complex, which mediates electron transfer between photosystem II (PSII) and photosystem I (PSI), cyclic electron flow around PSI, and state transitions. PetL is important for photoautotrophic growth as well as for electron transfer efficiency and stability of the cytochrome b6-f complex. This chain is Cytochrome b6-f complex subunit 6, found in Amaranthus caudatus (Love-lies-bleeding).